The sequence spans 309 residues: UDP-N-acetylenolpyruvoylglucosamine reductase (309 aa).

In terms of domain architecture, FAD-binding PCMH-type spans 40–204 (LGGKVPLFAI…LQATFKLKKG (165 aa)). Residue Arg182 is part of the active site. Ser233 acts as the Proton donor in catalysis. The active site involves Glu304.

It belongs to the MurB family. It depends on FAD as a cofactor.

It localises to the cytoplasm. The catalysed reaction is UDP-N-acetyl-alpha-D-muramate + NADP(+) = UDP-N-acetyl-3-O-(1-carboxyvinyl)-alpha-D-glucosamine + NADPH + H(+). The protein operates within cell wall biogenesis; peptidoglycan biosynthesis. In terms of biological role, cell wall formation. This chain is UDP-N-acetylenolpyruvoylglucosamine reductase, found in Fervidobacterium nodosum (strain ATCC 35602 / DSM 5306 / Rt17-B1).